A 66-amino-acid polypeptide reads, in one-letter code: MIVIILLFISIIVFLSVIQPQPSKNKSRQQADSGYFGYSDHSSHHDGCSSDGGFSDSGCGGGGGGD.

The signal sequence occupies residues 1–25 (MIVIILLFISIIVFLSVIQPQPSKN). The span at 21-31 (QPSKNKSRQQA) shows a compositional bias: polar residues. The tract at residues 21–66 (QPSKNKSRQQADSGYFGYSDHSSHHDGCSSDGGFSDSGCGGGGGGD) is disordered.

This is an uncharacterized protein from Bacillus subtilis (strain 168).